Here is a 254-residue protein sequence, read N- to C-terminus: Esterase YbfF (254 aa).

Active-site residues include Ser-89 and His-234.

This sequence belongs to the DmpD/TodF/XylF esterase family.

Its function is as follows. Displays esterase activity toward palmitoyl-CoA, malonyl-CoA and pNP-butyrate. This chain is Esterase YbfF (ybfF), found in Escherichia coli (strain K12).